A 465-amino-acid polypeptide reads, in one-letter code: Lactaldehyde dehydrogenase (465 aa).

Residue 220 to 225 coordinates NAD(+); that stretch reads GSVEVG. Residues Glu-240 and Cys-274 contribute to the active site.

Belongs to the aldehyde dehydrogenase family. In terms of assembly, homotetramer.

It catalyses the reaction (S)-lactaldehyde + NAD(+) + H2O = (S)-lactate + NADH + 2 H(+). It participates in cofactor biosynthesis; coenzyme F420 biosynthesis. Its function is as follows. Involved in F420 biosynthesis through the oxidation of lactaldehyde to lactate. In Methanococcus vannielii (strain ATCC 35089 / DSM 1224 / JCM 13029 / OCM 148 / SB), this protein is Lactaldehyde dehydrogenase.